We begin with the raw amino-acid sequence, 405 residues long: Argininosuccinate synthase (405 aa).

11–19 (AYSGGLDTS) provides a ligand contact to ATP. Tyr-90 lines the L-citrulline pocket. Gly-119 contacts ATP. The L-aspartate site is built by Thr-121, Asn-125, and Asp-126. Asn-125 contributes to the L-citrulline binding site. L-citrulline is bound by residues Arg-129, Ser-178, Ser-187, Glu-263, and Tyr-275.

Belongs to the argininosuccinate synthase family. Type 1 subfamily. Homotetramer.

Its subcellular location is the cytoplasm. The catalysed reaction is L-citrulline + L-aspartate + ATP = 2-(N(omega)-L-arginino)succinate + AMP + diphosphate + H(+). It functions in the pathway amino-acid biosynthesis; L-arginine biosynthesis; L-arginine from L-ornithine and carbamoyl phosphate: step 2/3. This is Argininosuccinate synthase from Legionella pneumophila (strain Paris).